Consider the following 728-residue polypeptide: 1,4-alpha-glucan branching enzyme GlgB (728 aa).

Asp405 serves as the catalytic Nucleophile. The Proton donor role is filled by Glu458.

Belongs to the glycosyl hydrolase 13 family. GlgB subfamily. Monomer.

It catalyses the reaction Transfers a segment of a (1-&gt;4)-alpha-D-glucan chain to a primary hydroxy group in a similar glucan chain.. It functions in the pathway glycan biosynthesis; glycogen biosynthesis. Functionally, catalyzes the formation of the alpha-1,6-glucosidic linkages in glycogen by scission of a 1,4-alpha-linked oligosaccharide from growing alpha-1,4-glucan chains and the subsequent attachment of the oligosaccharide to the alpha-1,6 position. The chain is 1,4-alpha-glucan branching enzyme GlgB from Escherichia coli O6:K15:H31 (strain 536 / UPEC).